Reading from the N-terminus, the 129-residue chain is Phosphoribosyl-AMP cyclohydrolase (129 aa).

A Mg(2+)-binding site is contributed by D76. Residue C77 participates in Zn(2+) binding. Mg(2+) contacts are provided by D78 and D80. Residues C97 and C104 each contribute to the Zn(2+) site.

It belongs to the PRA-CH family. As to quaternary structure, homodimer. Mg(2+) is required as a cofactor. Zn(2+) serves as cofactor.

It localises to the cytoplasm. It carries out the reaction 1-(5-phospho-beta-D-ribosyl)-5'-AMP + H2O = 1-(5-phospho-beta-D-ribosyl)-5-[(5-phospho-beta-D-ribosylamino)methylideneamino]imidazole-4-carboxamide. It participates in amino-acid biosynthesis; L-histidine biosynthesis; L-histidine from 5-phospho-alpha-D-ribose 1-diphosphate: step 3/9. In terms of biological role, catalyzes the hydrolysis of the adenine ring of phosphoribosyl-AMP. The sequence is that of Phosphoribosyl-AMP cyclohydrolase from Albidiferax ferrireducens (strain ATCC BAA-621 / DSM 15236 / T118) (Rhodoferax ferrireducens).